Here is a 1759-residue protein sequence, read N- to C-terminus: MIFESFILENLVFLCMKIMNSIVVVGLYYGFMTTFSIGPSYLFLLRARLVEEGTENKISATTGFITGQLIIFMSIYYAPLHLALGRPHTITVIAIPYLLFQFFGNSKKNFLNYGYKNPNSIRNFSIQRIFFQNLLFQFFNPLFLPSSIFMRFVNIYLFRCNNKVLFLTSSFIGWIIGHTFFMKWIEFLLICIQQNNLIKSNVRIQSNKYILSELKNSMFQIFVVFLFVTCLYYLGRIPPPFFSKKLLEIKESNEFFKKEKKGDVETNLQRIRTKQKRSNNKDIFPSIFLKKEKNLYKLDEQKNKLQKPLLNILFNYKRWNRPFRYIKNNQFENIIKNEISEFFFHTYPRNGREKIYFTYPQNLSTFQKMMETKIDIFTIKKISYDDSSNHSSYSNEEKRKKLSNEFITRTKLIDKELISLDIFENRIRLCNDETKKNYFTKITDPFLNGPFRGRIKKGFSTSIQDEKTYKKNHILINKIQEIFLYNSKKIPKKNNRNYQKLEENLKTFNKKLLVTTFLFNLISQFSKKSVSSFNYEVLYLFPEHEQVKMNSNLEEEKKLIIKILFDAITTDLNEKTKGNRNNTKSIKINEICKKVPRWSYKFMDELEELGGKMEADNSQIRSRKAKRVVILTNKSKFFKKYNTYNDLGDTENTENTEKKNELALRRYSQQSDFRRDIIKGSIRAQRRKTVTWKFFQKRVHSPLFLDKIEKSLFFSFDTFKSMKIFLKLKIWIRKKTEFKILGYIEEKTKKSPKKEEEKKKGNEERKRIEIAEAWDSIIFAQVIRGVLLITQCIIRKYILLPSLIIIKNMIRILFFQIPEWSEDYRDWKRERYIKCTYNGVQLSEREFPQKWLTDGIQIKIVFPFHLKPWHKYKIRCNKKKKDSKKKKNFCFLTVWGMEVELPFSSSPKNLFSFFDPILKELKKKTKQFEFFTFRVLKVFSEKFKLFLNIVIEKAKWIINRIMESLKKSIVFLTKKRKEFFESLFIQWKPKKLDELSENKIDEATISIQSIKSTNFALKKKKIKDLNTKRKVVIKKIKKLKKEEKKRGLVISETNIDSNKTISDSKRIEFEKKNLQILKRIHIRLTKKSHSFLKFFIKKIYLDIFLYIICIPKIHIQPFIESTKKFLNKWIYGNETNAERTYKTNQSIIPFISKLHKYFHNRNLNSHNYFDVSFLSQAYVFFNLLQTRIININIYKLRLLFEYHKNFFFVKNKIKNSFFGAQGIVHSKLEQKNLLNSKRNQWTNWLKNHYYQYDLSNSRWSKLLSQKWRNRITKFGVAQNPNLTKWDSYGKSPLIIYKEQQGAALKKKIRKQYRYDLLSYNFMNYANKKDSYIYGYRSLFQSNKNIWISSNYNTYKKNLFDRISNIFIKNYEDAIIIDIEKNSNRKYLDWMGIHREILNRSISNPEFWFFSKFVIFYNAYRSNSQIIPIKLLYLHSKVSKVNKNVSEKNITRKKKRIAVFRASKKQEDIEKNSVAVGRGSEKNSYVIKKKKVKNNMEVELHFLVRNFLIFHFNWKNFLGQNIFHNVKVYCLLIRLTNLRKMTIASIQRGELGLDIMIIQNQKNLTLPGLSKNKNNKLRKKELFVIEPVRLSRKNNKQFLKSKTMDLSLIHKNKRKIDKKYLKKIHVNKKSFYKYITRTRDQKITEKNEKEILNFLVPENILSARRRRELRMRICLYPNNRNSIHRNTIFDNENKVKKGFQVLTKKRNEKEKKKLMNFKIFLWPKYRLEDLACINRYWFNTHNGSRFSIVRIHLYPRVKIC.

Transmembrane regions (helical) follow at residues 23–45, 64–84, 129–149, 172–192, and 221–241; these read VVVG…LFLL, FITG…HLAL, IFFQ…SSIF, IGWI…LICI, and IFVV…PPPF.

It belongs to the TIC214 family. In terms of assembly, part of the Tic complex.

The protein resides in the plastid. It localises to the chloroplast inner membrane. In terms of biological role, involved in protein precursor import into chloroplasts. May be part of an intermediate translocation complex acting as a protein-conducting channel at the inner envelope. The chain is Protein TIC 214 from Phaseolus vulgaris (Kidney bean).